The following is a 306-amino-acid chain: Putative secretory carrier-associated membrane protein 1 (306 aa).

The disordered stretch occupies residues Met-1–Glu-60. Residues Met-1–Gln-141 are Cytoplasmic-facing. Over residues Lys-25–Ala-36 the composition is skewed to gly residues. The segment covering Asn-44–Leu-54 has biased composition (polar residues). A coiled-coil region spans residues Leu-72 to Ala-109. 4 helical membrane passes run Tyr-142 to Val-162, Ile-174 to Tyr-194, Phe-209 to Ala-229, and Ile-257 to Ile-277. Residues Gln-278 to Phe-306 are Cytoplasmic-facing.

It belongs to the SCAMP family.

It is found in the cell membrane. Its subcellular location is the cytoplasmic vesicle. It localises to the secretory vesicle membrane. Probably involved in membrane trafficking. In Oryza sativa subsp. indica (Rice), this protein is Putative secretory carrier-associated membrane protein 1 (SCAMP1).